The following is a 786-amino-acid chain: Calcium-independent phospholipase A2-gamma (786 aa).

Residue Asn4 is glycosylated (N-linked (GlcNAc...) asparagine). 3 disordered regions span residues 158-180 (KKYS…IIDK), 225-285 (KENS…SLPI), and 321-348 (SKSQ…EEKK). The segment covering 225-245 (KENSHFQEKSELEGKKVEEGK) has biased composition (basic and acidic residues). 2 stretches are compositionally biased toward polar residues: residues 246–258 (SSSL…TSQA) and 266–285 (SAGT…SLPI). One can recognise a PNPLA domain in the interval 449–644 (LTIDGGGTRG…LLNNPSALAM (196 aa)). Positions 453-458 (GGGTRG) match the GXGXXG motif. A helical membrane pass occupies residues 483-503 (ICGVSTGAILAFMLGLFHLPL). The short motif at 485–489 (GVSTG) is the GXSXG element. Residue Ser487 is the Nucleophile of the active site. The Proton acceptor role is filled by Asp631. Residues 631-633 (DGG) carry the DGA/G motif. At Lys740 the chain carries N6-succinyllysine.

In terms of tissue distribution, expressed in kidney, heart and brain.

It localises to the endoplasmic reticulum membrane. It is found in the mitochondrion membrane. The protein localises to the peroxisome membrane. It carries out the reaction a 1,2-diacyl-sn-glycero-3-phosphocholine + H2O = a 1-acyl-sn-glycero-3-phosphocholine + a fatty acid + H(+). The catalysed reaction is a 1,2-diacyl-sn-glycero-3-phosphocholine + H2O = a 2-acyl-sn-glycero-3-phosphocholine + a fatty acid + H(+). The enzyme catalyses a 1,2-diacyl-sn-glycero-3-phosphoethanolamine + H2O = a 1-acyl-sn-glycero-3-phosphoethanolamine + a fatty acid + H(+). It catalyses the reaction a 1-O-(1Z-alkenyl)-2-acyl-sn-glycero-3-phosphocholine + H2O = a 1-O-(1Z-alkenyl)-sn-glycero-3-phosphocholine + a fatty acid + H(+). It carries out the reaction a 1-acyl-sn-glycero-3-phosphocholine + H2O = sn-glycerol 3-phosphocholine + a fatty acid + H(+). The catalysed reaction is 1-acyl-2-(9Z,12Z)-octadecadienoyl-sn-glycero-3-phosphocholine + H2O = a 1-acyl-sn-glycero-3-phosphocholine + (9Z,12Z)-octadecadienoate + H(+). The enzyme catalyses 1-acyl-2-(5Z,8Z,11Z,14Z-eicosatetraenoyl)-sn-glycero-3-phosphocholine + H2O = a 1-acyl-sn-glycero-3-phosphocholine + (5Z,8Z,11Z,14Z)-eicosatetraenoate + H(+). It catalyses the reaction 1-hexadecanoyl-2-(5Z,8Z,11Z,14Z-eicosatetraenoyl)-sn-glycero-3-phosphocholine + H2O = 1-hexadecanoyl-sn-glycero-3-phosphocholine + (5Z,8Z,11Z,14Z)-eicosatetraenoate + H(+). It carries out the reaction 1-octadecanoyl-2-(9Z-octadecenoyl)-sn-glycero-3-phosphocholine + H2O = 1-octadecanoyl-sn-glycero-3-phosphocholine + (9Z)-octadecenoate + H(+). The catalysed reaction is 1-hexadecanoyl-2-(9Z-octadecenoyl)-sn-glycero-3-phosphocholine + H2O = 1-hexadecanoyl-sn-glycero-3-phosphocholine + (9Z)-octadecenoate + H(+). The enzyme catalyses 1-hexadecanoyl-2-(9Z,12Z-octadecadienoyl)-sn-glycero-3-phosphocholine + H2O = (9Z,12Z)-octadecadienoate + 1-hexadecanoyl-sn-glycero-3-phosphocholine + H(+). It catalyses the reaction 1-acyl-2-(9Z,12Z)-octadecadienoyl-sn-glycero-3-phosphoethanolamine + H2O = a 1-acyl-sn-glycero-3-phosphoethanolamine + (9Z,12Z)-octadecadienoate + H(+). It carries out the reaction 1-acyl-2-(5Z,8Z,11Z,14Z)-eicosatetraenoyl-sn-glycero-3-phosphoethanolamine + H2O = a 1-acyl-sn-glycero-3-phosphoethanolamine + (5Z,8Z,11Z,14Z)-eicosatetraenoate + H(+). The catalysed reaction is 1-hexadecanoyl-2-(5Z,8Z,11Z,14Z-eicosatetraenoyl)-sn-glycero-3-phosphoethanolamine + H2O = 1-hexadecanoyl-sn-glycero-3-phosphoethanolamine + (5Z,8Z,11Z,14Z)-eicosatetraenoate + H(+). The enzyme catalyses 1-hexadecanoyl-2-(5Z,8Z,11Z,14Z-eicosatetraenoyl)-sn-glycero-3-phosphocholine + H2O = 2-(5Z,8Z,11Z,14Z)-eicosatetraenoyl-sn-glycero-3-phosphocholine + hexadecanoate + H(+). It catalyses the reaction 1-octadecanoyl-2-(9Z-octadecenoyl)-sn-glycero-3-phosphocholine + H2O = 2-(9Z-octadecenoyl)-sn-glycero-3-phosphocholine + octadecanoate + H(+). It carries out the reaction 1-hexadecanoyl-2-(4Z,7Z,10Z,13Z,16Z,19Z-docosahexaenoyl)-sn-glycero-3-phosphocholine + H2O = 2-(4Z,7Z,10Z,13Z,16Z,19Z-docosahexaenoyl)-sn-glycero-3-phosphocholine + hexadecanoate + H(+). The catalysed reaction is 1-O-(1Z)-hexadecenyl-2 (5Z,8Z,11Z,14Z)-eicosatetraenoyl-sn-glycero-3-phosphocholine + H2O = 1-(1Z-hexadecenyl)-sn-glycero-3-phosphocholine + (5Z,8Z,11Z,14Z)-eicosatetraenoate + H(+). The enzyme catalyses 1-O-(1Z-hexadecenyl)-2-(9Z-octadecenoyl)-sn-glycero-3-phosphocholine + H2O = 1-(1Z-hexadecenyl)-sn-glycero-3-phosphocholine + (9Z)-octadecenoate + H(+). It catalyses the reaction 1-hexadecanoyl-sn-glycero-3-phosphocholine + H2O = sn-glycerol 3-phosphocholine + hexadecanoate + H(+). It carries out the reaction 1',3'-bis-[1,2-di-(9Z,12Z-octadecadienoyl)-sn-glycero-3-phospho]-glycerol + H2O = 1'-[1,2-di-(9Z,12Z-octadecadienoyl)-sn-glycero-3-phospho]-3'-[1-(9Z,12Z-octadecadienoyl)-sn-glycero-3-phospho]-glycerol + (9Z,12Z)-octadecadienoate + H(+). The catalysed reaction is 1'-[1-acyl-2-(9-hydroxy-(10E,12Z)-octadecadienoyl)-sn-glycero-3-phospho]-3'-[1,2-diacyl-sn-glycero-3-phospho]-glycerol + H2O = 9-hydroxy-(10E,12Z)-octadecadienoate + 1'-[1,2-diacyl-sn-glycero-3-phospho],3'-[1-acyl-sn-glycero-3-phospho]-glycerol + H(+). Its pathway is phospholipid metabolism. With respect to regulation, calcium-independent phospholipase. In terms of biological role, calcium-independent and membrane-bound phospholipase, that catalyzes the esterolytic cleavage of fatty acids from glycerophospholipids to yield free fatty acids and lysophospholipids, hence regulating membrane physical properties and the release of lipid second messengers and growth factors. Hydrolyzes phosphatidylethanolamine, phosphatidylcholine and probably phosphatidylinositol with a possible preference for the former. Has also a broad substrate specificity in terms of fatty acid moieties, hydrolyzing saturated and mono-unsaturated fatty acids at nearly equal rates from either the sn-1 or sn-2 position in diacyl phosphatidylcholine. However, has a weak activity toward polyunsaturated fatty acids at the sn-2 position, and thereby favors the production of 2-arachidonoyl lysophosphatidylcholine, a key branch point metabolite in eicosanoid signaling. On the other hand, can produce arachidonic acid from the sn-1 position of diacyl phospholipid and from the sn-2 position of arachidonate-containing plasmalogen substrates. Therefore, plays an important role in the mobilization of arachidonic acid in response to cellular stimuli and the generation of lipid second messengers. Can also hydrolyze lysophosphatidylcholine. In the mitochondrial compartment, catalyzes the hydrolysis and release of oxidized aliphatic chains from cardiolipin and integrates mitochondrial bioenergetics and signaling. It is essential for maintaining efficient bioenergetic mitochondrial function through tailoring mitochondrial membrane lipid metabolism and composition. This chain is Calcium-independent phospholipase A2-gamma, found in Oryctolagus cuniculus (Rabbit).